A 352-amino-acid polypeptide reads, in one-letter code: N-acetyl-gamma-glutamyl-phosphate reductase (352 aa).

The active site involves Cys155.

It belongs to the NAGSA dehydrogenase family. Type 1 subfamily.

The protein resides in the cytoplasm. It carries out the reaction N-acetyl-L-glutamate 5-semialdehyde + phosphate + NADP(+) = N-acetyl-L-glutamyl 5-phosphate + NADPH + H(+). Its pathway is amino-acid biosynthesis; L-arginine biosynthesis; N(2)-acetyl-L-ornithine from L-glutamate: step 3/4. Catalyzes the NADPH-dependent reduction of N-acetyl-5-glutamyl phosphate to yield N-acetyl-L-glutamate 5-semialdehyde. The chain is N-acetyl-gamma-glutamyl-phosphate reductase from Brachyspira hyodysenteriae (strain ATCC 49526 / WA1).